Consider the following 555-residue polypeptide: 6-phosphofructo-2-kinase/fructose-2,6-bisphosphatase 3 (555 aa).

Positions 1 to 245 (MPLELTQSRV…VYYLMNIHVQ (245 aa)) are 6-phosphofructo-2-kinase. 42-50 (GLPARGKTY) serves as a coordination point for ATP. Positions 75 and 99 each coordinate beta-D-fructose 6-phosphate. The active site involves Asp125. Beta-D-fructose 6-phosphate is bound by residues Thr127 and Arg133. Residue Cys155 is part of the active site. Residue 164-169 (NIMEVK) coordinates ATP. Beta-D-fructose 6-phosphate contacts are provided by Lys169, Arg190, and Tyr194. Residues 246 to 555 (PRTIYLCRHG…CHIFSKFSPY (310 aa)) are fructose-2,6-bisphosphatase. Arg253 provides a ligand contact to beta-D-fructose 2,6-bisphosphate. The active-site Tele-phosphohistidine intermediate is His254. Residues Asn260 and Gly266 each contribute to the beta-D-fructose 2,6-bisphosphate site. The active-site Proton donor/acceptor is the Glu323. Beta-D-fructose 2,6-bisphosphate-binding residues include Tyr334, Arg348, Lys352, Tyr363, Gln389, and Arg393. 345–348 (YALR) lines the ATP pocket. ATP contacts are provided by residues 389 to 393 (QAVLR) and Tyr425. A disordered region spans residues 475 to 504 (KQDAKKGPNPLMRRNSVTPLASPEPTKKPR). Ser490 carries the post-translational modification Phosphoserine; by AMPK and PKA. Thr492 bears the Phosphothreonine mark. Ser496 is subject to Phosphoserine.

The protein in the C-terminal section; belongs to the phosphoglycerate mutase family. As to quaternary structure, homodimer. Forms a heterodimer with PFKFB2. Post-translationally, phosphorylation by AMPK stimulates activity.

The catalysed reaction is beta-D-fructose 2,6-bisphosphate + H2O = beta-D-fructose 6-phosphate + phosphate. It carries out the reaction beta-D-fructose 6-phosphate + ATP = beta-D-fructose 2,6-bisphosphate + ADP + H(+). In terms of biological role, catalyzes both the synthesis and degradation of fructose 2,6-bisphosphate. The protein is 6-phosphofructo-2-kinase/fructose-2,6-bisphosphatase 3 (Pfkfb3) of Rattus norvegicus (Rat).